The primary structure comprises 213 residues: Probable nicotinate-nucleotide adenylyltransferase (213 aa).

Belongs to the NadD family.

It carries out the reaction nicotinate beta-D-ribonucleotide + ATP + H(+) = deamido-NAD(+) + diphosphate. It functions in the pathway cofactor biosynthesis; NAD(+) biosynthesis; deamido-NAD(+) from nicotinate D-ribonucleotide: step 1/1. Its function is as follows. Catalyzes the reversible adenylation of nicotinate mononucleotide (NaMN) to nicotinic acid adenine dinucleotide (NaAD). The protein is Probable nicotinate-nucleotide adenylyltransferase of Escherichia coli O17:K52:H18 (strain UMN026 / ExPEC).